We begin with the raw amino-acid sequence, 560 residues long: DNA ligase B (560 aa).

Lys124 functions as the N6-AMP-lysine intermediate in the catalytic mechanism.

This sequence belongs to the NAD-dependent DNA ligase family. LigB subfamily.

It catalyses the reaction NAD(+) + (deoxyribonucleotide)n-3'-hydroxyl + 5'-phospho-(deoxyribonucleotide)m = (deoxyribonucleotide)n+m + AMP + beta-nicotinamide D-nucleotide.. Catalyzes the formation of phosphodiester linkages between 5'-phosphoryl and 3'-hydroxyl groups in double-stranded DNA using NAD as a coenzyme and as the energy source for the reaction. This chain is DNA ligase B, found in Escherichia coli (strain ATCC 8739 / DSM 1576 / NBRC 3972 / NCIMB 8545 / WDCM 00012 / Crooks).